The chain runs to 541 residues: Calcium-dependent protein kinase 26 (541 aa).

The span at 1–11 (MGQCCTGGGKA) shows a compositional bias: gly residues. The tract at residues 1–74 (MGQCCTGGGK…AGPIGEVLER (74 aa)) is disordered. A lipid anchor (N-myristoyl glycine) is attached at glycine 2. Positions 38 to 67 (AKQQPCSPAAKAAATEAAAAASSSKKPAGP) are enriched in low complexity. The 259-residue stretch at 83–341 (YSIGKELGRG…AFQVLNHPWI (259 aa)) folds into the Protein kinase domain. ATP contacts are provided by residues 89 to 97 (LGRGQFGVT) and lysine 112. Residue aspartate 207 is the Proton acceptor of the active site. Residues 347-377 (APDVPLDNVVLNRLKQFRAMNQFKKAALRII) are autoinhibitory domain. EF-hand domains are found at residues 384 to 419 (EEIK…QGTK), 420 to 455 (FSDN…MNKM), 456 to 491 (DREE…QGLY), and 493 to 526 (ANEI…GSGC). Ca(2+) is bound by residues aspartate 397, aspartate 399, serine 401, threonine 403, glutamate 408, aspartate 433, aspartate 435, asparagine 437, glutamate 444, aspartate 469, aspartate 471, serine 473, tyrosine 475, glutamate 480, aspartate 504, asparagine 506, aspartate 508, arginine 510, and glutamate 515.

Belongs to the protein kinase superfamily. Ser/Thr protein kinase family. CDPK subfamily. As to expression, specifically expressed in heading panicles, spikelets and mature pollen grains. Not expressed in vegetative tissues.

Its subcellular location is the membrane. The enzyme catalyses L-seryl-[protein] + ATP = O-phospho-L-seryl-[protein] + ADP + H(+). It catalyses the reaction L-threonyl-[protein] + ATP = O-phospho-L-threonyl-[protein] + ADP + H(+). Activated by calcium. Autophosphorylation may play an important role in the regulation of the kinase activity. Its function is as follows. May play a role in signal transduction pathways that involve calcium as a second messenger. The polypeptide is Calcium-dependent protein kinase 26 (Oryza sativa subsp. japonica (Rice)).